Here is a 179-residue protein sequence, read N- to C-terminus: SCAN domain-containing protein 1 (179 aa).

Residues 1–104 (MAATEPILAA…PGPAGSRLGP (104 aa)) are disordered. Low complexity predominate over residues 52 to 80 (SPNAAVPEAIPTPRAAASAALELPLGPAP). Residues 108–166 (RQRFRQFRYQDAAGPREAFRQLRELSRQWLRPDIRTKEQIVEMLVQEQLLAILPEAARA) enclose the SCAN box domain.

As to quaternary structure, interacts with ZNF202.

It is found in the nucleus. Functionally, may regulate transcriptional activity. The polypeptide is SCAN domain-containing protein 1 (SCAND1) (Homo sapiens (Human)).